The following is a 144-amino-acid chain: Large ribosomal subunit protein uL15 (144 aa).

The segment covering 1–10 (MYLNTISPSR) has biased composition (polar residues). The tract at residues 1 to 51 (MYLNTISPSRGSKHLSKRVGRGIGSGLGKTGGRGHKGQKSRSGGKVRLGFE) is disordered. Basic residues predominate over residues 11–20 (GSKHLSKRVG). Residues 21-31 (RGIGSGLGKTG) show a composition bias toward gly residues. Basic residues predominate over residues 32-44 (GRGHKGQKSRSGG).

This sequence belongs to the universal ribosomal protein uL15 family. As to quaternary structure, part of the 50S ribosomal subunit.

Its function is as follows. Binds to the 23S rRNA. The polypeptide is Large ribosomal subunit protein uL15 (Blochmanniella pennsylvanica (strain BPEN)).